A 306-amino-acid polypeptide reads, in one-letter code: Methionyl-tRNA formyltransferase (306 aa).

109–112 contributes to the (6S)-5,6,7,8-tetrahydrofolate binding site; that stretch reads SILP.

This sequence belongs to the Fmt family.

The catalysed reaction is L-methionyl-tRNA(fMet) + (6R)-10-formyltetrahydrofolate = N-formyl-L-methionyl-tRNA(fMet) + (6S)-5,6,7,8-tetrahydrofolate + H(+). Attaches a formyl group to the free amino group of methionyl-tRNA(fMet). The formyl group appears to play a dual role in the initiator identity of N-formylmethionyl-tRNA by promoting its recognition by IF2 and preventing the misappropriation of this tRNA by the elongation apparatus. The chain is Methionyl-tRNA formyltransferase from Herpetosiphon aurantiacus (strain ATCC 23779 / DSM 785 / 114-95).